The chain runs to 209 residues: D-aminoacyl-tRNA deacylase 1 (209 aa).

The short motif at 139–140 is the Gly-cisPro motif, important for rejection of L-amino acids element; it reads GP. A disordered region spans residues 142 to 209; it reads TIELESPAPG…EGDVSSEREP (68 aa). Basic and acidic residues-rich tracts occupy residues 159-170 and 181-194; these read QLSKLEKQQQRK and SSKE…EDRS. Residues serine 197, serine 204, and serine 205 each carry the phosphoserine modification.

It belongs to the DTD family. In terms of assembly, homodimer. Interacts with CDC45 and TOPBP1. Post-translationally, preferentially phosphorylated in cells arrested early in S phase. Phosphorylation in the C-terminus weakens the interaction with CDC45.

The protein localises to the nucleus. Its subcellular location is the cytoplasm. It catalyses the reaction glycyl-tRNA(Ala) + H2O = tRNA(Ala) + glycine + H(+). The enzyme catalyses a D-aminoacyl-tRNA + H2O = a tRNA + a D-alpha-amino acid + H(+). An aminoacyl-tRNA editing enzyme that deacylates mischarged D-aminoacyl-tRNAs. Also deacylates mischarged glycyl-tRNA(Ala), protecting cells against glycine mischarging by AlaRS. Acts via tRNA-based rather than protein-based catalysis; rejects L-amino acids rather than detecting D-amino acids in the active site. By recycling D-aminoacyl-tRNA to D-amino acids and free tRNA molecules, this enzyme counteracts the toxicity associated with the formation of D-aminoacyl-tRNA entities in vivo and helps enforce protein L-homochirality. In terms of biological role, ATPase involved in DNA replication, may facilitate loading of CDC45 onto pre-replication complexes. This chain is D-aminoacyl-tRNA deacylase 1 (Dtd1), found in Mus musculus (Mouse).